The chain runs to 153 residues: Putative transmembrane protein INAFM2 (153 aa).

Positions 1 to 23 are enriched in basic and acidic residues; that stretch reads MKERDAAPAERGKPATYTGDKKA. The interval 1–24 is disordered; the sequence is MKERDAAPAERGKPATYTGDKKAK. The chain crosses the membrane as a helical span at residues 36–56; sequence LATVFAYVLSVSLAAIVLAVY. The disordered stretch occupies residues 66-153; the sequence is AGTSGGAAGP…EETAAAPGSR (88 aa). The span at 79 to 101 shows a compositional bias: low complexity; that stretch reads GSNATGPSGTSGAAAAGPNTTGS. The span at 118 to 131 shows a compositional bias: pro residues; the sequence is PAPPEPPADSPPAG.

The protein resides in the membrane. The polypeptide is Putative transmembrane protein INAFM2 (Homo sapiens (Human)).